Consider the following 435-residue polypeptide: Monodictyphenone cluster transcription factor (435 aa).

A DNA-binding region (zn(2)-C6 fungal-type) is located at residues 23-50 (CHACALSKLKCSQDKPTCSRCVKRGTAC). The tract at residues 117–147 (QYHQRTPSYPESIPSLLSSTGPGTSATSPLT) is disordered. Positions 130–147 (PSLLSSTGPGTSATSPLT) are enriched in low complexity.

The protein resides in the nucleus. Functionally, transcription factor that regulates the expression of the gene cluster that mediates the biosynthesis of monodictyphenone, a prenyl xanthone derivative. This is Monodictyphenone cluster transcription factor from Emericella nidulans (strain FGSC A4 / ATCC 38163 / CBS 112.46 / NRRL 194 / M139) (Aspergillus nidulans).